Consider the following 218-residue polypeptide: Putative receptor like protein 25 (218 aa).

Over 1 to 178 (MIYTKNAYGS…QEDAKVLNWK (178 aa)) the chain is Extracellular. 4 LRR repeats span residues 34 to 58 (LTLY…IGLL), 59 to 82 (KALI…MANL), 83 to 106 (IELE…LKTL), and 108 to 131 (FLGY…QITG). An N-linked (GlcNAc...) asparagine glycan is attached at Asn-65. Residue Asn-113 is glycosylated (N-linked (GlcNAc...) asparagine). The chain crosses the membrane as a helical span at residues 179 to 199 (AVATGYGPGVFFGLAIAQIIA). At 200–218 (SYKPEWLVKIIGPNKRRNH) the chain is on the cytoplasmic side.

This sequence belongs to the RLP family.

The protein resides in the cell membrane. The polypeptide is Putative receptor like protein 25 (Arabidopsis thaliana (Mouse-ear cress)).